A 624-amino-acid chain; its full sequence is ABC transporter G family member 23 (624 aa).

One can recognise an ABC transporter domain in the interval Leu52–Glu296. Position 84–91 (Gly84–Ser91) interacts with ATP. Positions Thr350–Tyr560 constitute an ABC transmembrane type-2 domain. 6 helical membrane passes run Leu369 to Thr389, Leu402 to Ile422, Ile450 to Ile470, Phe480 to Phe500, Gly511 to Pro531, and Ile595 to Leu615.

It belongs to the ABC transporter superfamily. ABCG family. Eye pigment precursor importer (TC 3.A.1.204) subfamily.

It localises to the membrane. The sequence is that of ABC transporter G family member 23 (ABCG23) from Arabidopsis thaliana (Mouse-ear cress).